We begin with the raw amino-acid sequence, 140 residues long: Organic hydroperoxide resistance protein-like (140 aa).

This sequence belongs to the OsmC/Ohr family.

The protein is Organic hydroperoxide resistance protein-like of Staphylococcus aureus (strain bovine RF122 / ET3-1).